Consider the following 194-residue polypeptide: Imidazoleglycerol-phosphate dehydratase (194 aa).

This sequence belongs to the imidazoleglycerol-phosphate dehydratase family.

It localises to the cytoplasm. The catalysed reaction is D-erythro-1-(imidazol-4-yl)glycerol 3-phosphate = 3-(imidazol-4-yl)-2-oxopropyl phosphate + H2O. Its pathway is amino-acid biosynthesis; L-histidine biosynthesis; L-histidine from 5-phospho-alpha-D-ribose 1-diphosphate: step 6/9. In Listeria welshimeri serovar 6b (strain ATCC 35897 / DSM 20650 / CCUG 15529 / CIP 8149 / NCTC 11857 / SLCC 5334 / V8), this protein is Imidazoleglycerol-phosphate dehydratase.